Consider the following 571-residue polypeptide: Streptolysin O (571 aa).

Positions M1–S33 are cleaved as a signal peptide. Residues N30–E108 are disordered. A compositionally biased stretch (low complexity) spans N37–E48. Composition is skewed to basic and acidic residues over residues P50–D68 and A79–E108. The next 4 membrane-spanning stretches (beta stranded) occupy residues K260–I273, I280–E289, S358–A367, and K375–S387. The short motif at E529–R539 is the Conserved undecapeptide element. The Cholesterol binding signature appears at T561 to L562.

The protein belongs to the cholesterol-dependent cytolysin family. As to quaternary structure, homooligomeric pore complex of 35 to 50 subunits; when inserted in the host membrane.

Its subcellular location is the secreted. It is found in the host cell membrane. Its function is as follows. A cholesterol-dependent toxin that causes cytolysis by forming pores in cholesterol containing host membranes. After binding to target membranes, the protein undergoes a major conformation change, leading to its insertion in the host membrane and formation of an oligomeric pore complex. Cholesterol is required for binding to host membranes, membrane insertion and pore formation; cholesterol binding is mediated by a Thr-Leu pair in the C-terminus. Can be reversibly inactivated by oxidation. In Streptococcus pyogenes serotype M3 (strain ATCC BAA-595 / MGAS315), this protein is Streptolysin O (slo).